A 163-amino-acid polypeptide reads, in one-letter code: NADH-quinone oxidoreductase subunit I (163 aa).

4Fe-4S ferredoxin-type domains follow at residues 54–84 (LRRY…IESE) and 94–123 (TRYD…ETRI). 8 residues coordinate [4Fe-4S] cluster: Cys64, Cys67, Cys70, Cys74, Cys103, Cys106, Cys109, and Cys113.

Belongs to the complex I 23 kDa subunit family. As to quaternary structure, NDH-1 is composed of 14 different subunits. Subunits NuoA, H, J, K, L, M, N constitute the membrane sector of the complex. The cofactor is [4Fe-4S] cluster.

It is found in the cell inner membrane. It catalyses the reaction a quinone + NADH + 5 H(+)(in) = a quinol + NAD(+) + 4 H(+)(out). Functionally, NDH-1 shuttles electrons from NADH, via FMN and iron-sulfur (Fe-S) centers, to quinones in the respiratory chain. The immediate electron acceptor for the enzyme in this species is believed to be ubiquinone. Couples the redox reaction to proton translocation (for every two electrons transferred, four hydrogen ions are translocated across the cytoplasmic membrane), and thus conserves the redox energy in a proton gradient. The sequence is that of NADH-quinone oxidoreductase subunit I from Methylobacillus flagellatus (strain ATCC 51484 / DSM 6875 / VKM B-1610 / KT).